Consider the following 166-residue polypeptide: UPF0134 protein MPN_138 (166 aa).

The protein belongs to the UPF0134 family.

The sequence is that of UPF0134 protein MPN_138 from Mycoplasma pneumoniae (strain ATCC 29342 / M129 / Subtype 1) (Mycoplasmoides pneumoniae).